Here is a 442-residue protein sequence, read N- to C-terminus: tRNA modification GTPase MnmE (442 aa).

Residues Arg22, Glu79, and Lys119 each coordinate (6S)-5-formyl-5,6,7,8-tetrahydrofolate. The region spanning 216–366 is the TrmE-type G domain; it reads GIKTCLVGAP…LLEKIKSIFA (151 aa). A K(+)-binding site is contributed by Asn226. GTP-binding positions include 226 to 231, 245 to 251, and 270 to 273; these read NSGKSS, SEIPGTT, and DTAG. Residue Ser230 participates in Mg(2+) binding. Positions 245, 247, and 250 each coordinate K(+). Thr251 is a Mg(2+) binding site. A (6S)-5-formyl-5,6,7,8-tetrahydrofolate-binding site is contributed by Lys442.

The protein belongs to the TRAFAC class TrmE-Era-EngA-EngB-Septin-like GTPase superfamily. TrmE GTPase family. As to quaternary structure, homodimer. Heterotetramer of two MnmE and two MnmG subunits. It depends on K(+) as a cofactor.

Its subcellular location is the cytoplasm. Its function is as follows. Exhibits a very high intrinsic GTPase hydrolysis rate. Involved in the addition of a carboxymethylaminomethyl (cmnm) group at the wobble position (U34) of certain tRNAs, forming tRNA-cmnm(5)s(2)U34. The polypeptide is tRNA modification GTPase MnmE (Mesomycoplasma hyopneumoniae (strain 7448) (Mycoplasma hyopneumoniae)).